A 362-amino-acid polypeptide reads, in one-letter code: Heme A synthase (362 aa).

The next 5 membrane-spanning stretches (helical) occupy residues 12-32 (AVRI…LVGG), 102-122 (VIGA…DLGG), 128-148 (LWII…MVAS), 159-179 (VRLA…VWTL), and 198-218 (AAVL…VAGL). His-262 contributes to the heme binding site. The next 3 helical transmembrane spans lie at 264 to 281 (MLAY…IDAW), 289 to 309 (GALA…VTLL), and 312 to 332 (VPIG…TLAV). His-320 is a binding site for heme.

The protein belongs to the COX15/CtaA family. Type 2 subfamily. As to quaternary structure, interacts with CtaB. The cofactor is heme b.

The protein localises to the cell membrane. The catalysed reaction is Fe(II)-heme o + 2 A + H2O = Fe(II)-heme a + 2 AH2. It functions in the pathway porphyrin-containing compound metabolism; heme A biosynthesis; heme A from heme O: step 1/1. In terms of biological role, catalyzes the conversion of heme O to heme A by two successive hydroxylations of the methyl group at C8. The first hydroxylation forms heme I, the second hydroxylation results in an unstable dihydroxymethyl group, which spontaneously dehydrates, resulting in the formyl group of heme A. In Rhodopseudomonas palustris (strain BisB18), this protein is Heme A synthase.